A 397-amino-acid polypeptide reads, in one-letter code: Elongation factor Tu (397 aa).

The region spanning 10 to 206 (KPHVNIGTIG…AVDTYIPTPE (197 aa)) is the tr-type G domain. The tract at residues 19–26 (GHVDHGKT) is G1. 19 to 26 (GHVDHGKT) lines the GTP pocket. Residue Thr-26 coordinates Mg(2+). Residues 60–64 (GITIN) are G2. Residues 81 to 84 (DCPG) form a G3 region. GTP contacts are provided by residues 81 to 85 (DCPGH) and 136 to 139 (NKSD). The interval 136–139 (NKSD) is G4. The G5 stretch occupies residues 174-176 (SAL).

This sequence belongs to the TRAFAC class translation factor GTPase superfamily. Classic translation factor GTPase family. EF-Tu/EF-1A subfamily. Monomer.

It localises to the cytoplasm. The enzyme catalyses GTP + H2O = GDP + phosphate + H(+). Functionally, GTP hydrolase that promotes the GTP-dependent binding of aminoacyl-tRNA to the A-site of ribosomes during protein biosynthesis. This Clostridium kluyveri (strain ATCC 8527 / DSM 555 / NBRC 12016 / NCIMB 10680 / K1) protein is Elongation factor Tu.